Reading from the N-terminus, the 98-residue chain is Aspartyl/glutamyl-tRNA(Asn/Gln) amidotransferase subunit C (98 aa).

Belongs to the GatC family. In terms of assembly, heterotrimer of A, B and C subunits.

The catalysed reaction is L-glutamyl-tRNA(Gln) + L-glutamine + ATP + H2O = L-glutaminyl-tRNA(Gln) + L-glutamate + ADP + phosphate + H(+). The enzyme catalyses L-aspartyl-tRNA(Asn) + L-glutamine + ATP + H2O = L-asparaginyl-tRNA(Asn) + L-glutamate + ADP + phosphate + 2 H(+). Functionally, allows the formation of correctly charged Asn-tRNA(Asn) or Gln-tRNA(Gln) through the transamidation of misacylated Asp-tRNA(Asn) or Glu-tRNA(Gln) in organisms which lack either or both of asparaginyl-tRNA or glutaminyl-tRNA synthetases. The reaction takes place in the presence of glutamine and ATP through an activated phospho-Asp-tRNA(Asn) or phospho-Glu-tRNA(Gln). This Mycobacterium avium (strain 104) protein is Aspartyl/glutamyl-tRNA(Asn/Gln) amidotransferase subunit C.